The sequence spans 81 residues: Large ribosomal subunit protein bL27 (81 aa).

The span at 1–11 (MATSKSGGSSK) shows a compositional bias: polar residues. The interval 1–21 (MATSKSGGSSKNGRDSISKRL) is disordered.

The protein belongs to the bacterial ribosomal protein bL27 family.

The sequence is that of Large ribosomal subunit protein bL27 from Borrelia hermsii (strain HS1 / DAH).